Reading from the N-terminus, the 180-residue chain is Probable chorismate pyruvate-lyase (180 aa).

The substrate site is built by R76, L113, and E171.

It belongs to the UbiC family.

The protein localises to the cytoplasm. It carries out the reaction chorismate = 4-hydroxybenzoate + pyruvate. The protein operates within cofactor biosynthesis; ubiquinone biosynthesis. Its function is as follows. Removes the pyruvyl group from chorismate, with concomitant aromatization of the ring, to provide 4-hydroxybenzoate (4HB) for the ubiquinone pathway. The sequence is that of Probable chorismate pyruvate-lyase from Pseudoalteromonas translucida (strain TAC 125).